A 44-amino-acid polypeptide reads, in one-letter code: Phosphatase RapE inhibitor (44 aa).

2 propeptides span residues 1-30 and 36-44; these read MKSK…MKEA and LAPTHEFLV.

Belongs to the Phr family. In terms of processing, contains a predicted signal peptide cleavage site in the N-terminal region, however the propeptide is probably only subject to processing events at the ends of the mature peptide.

The protein localises to the secreted. The protein resides in the cytoplasm. Functionally, signaling molecule involved in the regulation of sporulation. Secreted during production, but the mature peptide acts intracellularly, indicating that it needs to be imported into the cell to function. Inhibitor of the RapE phosphatase activity. Does not inhibit the phosphatase activity of RapA and RapB. Probably plays a dispensable role in the overall context of sporulation initiation. This Bacillus subtilis (strain 168) protein is Phosphatase RapE inhibitor (phrE).